Reading from the N-terminus, the 380-residue chain is Cobalt-precorrin-5B C(1)-methyltransferase (380 aa).

The protein belongs to the CbiD family.

The enzyme catalyses Co-precorrin-5B + S-adenosyl-L-methionine = Co-precorrin-6A + S-adenosyl-L-homocysteine. It participates in cofactor biosynthesis; adenosylcobalamin biosynthesis; cob(II)yrinate a,c-diamide from sirohydrochlorin (anaerobic route): step 6/10. In terms of biological role, catalyzes the methylation of C-1 in cobalt-precorrin-5B to form cobalt-precorrin-6A. The protein is Cobalt-precorrin-5B C(1)-methyltransferase of Salinispora arenicola (strain CNS-205).